We begin with the raw amino-acid sequence, 411 residues long: [Pyruvate dehydrogenase (acetyl-transferring)] kinase isozyme 4, mitochondrial (411 aa).

The Histidine kinase domain occupies 138–368 (IIEYKDACTV…DAIIYLKALS (231 aa)). Residues 254-261 (ELFKNAMR), Asp-293, 312-313 (ST), and 329-334 (GFGYGL) each bind ATP.

This sequence belongs to the PDK/BCKDK protein kinase family. As to quaternary structure, homodimer. Interacts with the pyruvate dehydrogenase complex subunit DLAT, and is part of the multimeric pyruvate dehydrogenase complex that contains multiple copies of pyruvate dehydrogenase (E1), dihydrolipoamide acetyltransferase (DLAT, E2) and lipoamide dehydrogenase (DLD, E3). As to expression, ubiquitous; highest levels of expression in heart and skeletal muscle.

The protein resides in the mitochondrion matrix. The catalysed reaction is L-seryl-[pyruvate dehydrogenase E1 alpha subunit] + ATP = O-phospho-L-seryl-[pyruvate dehydrogenase E1 alpha subunit] + ADP + H(+). In terms of biological role, kinase that plays a key role in regulation of glucose and fatty acid metabolism and homeostasis via phosphorylation of the pyruvate dehydrogenase subunits PDHA1 and PDHA2. This inhibits pyruvate dehydrogenase activity, and thereby regulates metabolite flux through the tricarboxylic acid cycle, down-regulates aerobic respiration and inhibits the formation of acetyl-coenzyme A from pyruvate. Inhibition of pyruvate dehydrogenase decreases glucose utilization and increases fat metabolism in response to prolonged fasting and starvation. Plays an important role in maintaining normal blood glucose levels under starvation, and is involved in the insulin signaling cascade. Via its regulation of pyruvate dehydrogenase activity, plays an important role in maintaining normal blood pH and in preventing the accumulation of ketone bodies under starvation. In the fed state, mediates cellular responses to glucose levels and to a high-fat diet. Regulates both fatty acid oxidation and de novo fatty acid biosynthesis. Plays a role in the generation of reactive oxygen species. Protects detached epithelial cells against anoikis. Plays a role in cell proliferation via its role in regulating carbohydrate and fatty acid metabolism. The chain is [Pyruvate dehydrogenase (acetyl-transferring)] kinase isozyme 4, mitochondrial (PDK4) from Homo sapiens (Human).